Consider the following 1658-residue polypeptide: Cortactin-binding protein 2 (1658 aa).

Disordered stretches follow at residues 1–24, 203–235, 348–437, 451–475, and 495–612; these read MATD…GATA, KTKT…SEFD, GAAL…LHPG, GNAN…SPTS, and RFTS…PPKP. A coiled-coil region spans residues 119–276; the sequence is RKMQERMSTQ…EQLKRGNDSK (158 aa). Over residues 214 to 235 the composition is skewed to basic and acidic residues; that stretch reads SAEKRRSTEMEAQMEKQLSEFD. Residues 385 to 394 are compositionally biased toward low complexity; sequence GPSAGSASST. Over residues 399 to 418 the composition is skewed to polar residues; the sequence is NSTAPPTVQTPGIAPQSYSQ. An Asymmetric dimethylarginine modification is found at R495. The segment covering 509–520 has biased composition (low complexity); it reads AAPTGDGGTCPP. Over residues 580–590 the composition is skewed to polar residues; it reads TMASPPSSLPQ. ANK repeat units lie at residues 706–736, 740–769, 773–802, 806–835, 839–868, and 909–939; these read GRPT…DINY, DGHS…QVNA, NGFT…NINH, EGQT…DRSV, DGWT…PACR, and EGWT…EPER. A disordered region spans residues 1448 to 1478; it reads ESGAWRKVSTSPRKKSGRFSPPSWNKPGLSE. Phosphoserine is present on S1521. Disordered regions lie at residues 1538–1595 and 1611–1642; these read RSES…NSQS and PRSK…NTKE. Basic and acidic residues predominate over residues 1539–1558; sequence SESDISKIADSRDDLRRFDG. Polar residues-rich tracts occupy residues 1559-1569 and 1581-1595; these read SRNNPAFSTVN and PLSS…NSQS. The segment covering 1619–1633 has biased composition (low complexity); sequence SQNTKRSSSSSNTRQ.

As to quaternary structure, interacts with CTTN/cortactin SH3 domain. Interacts with STRN, STRN4/zinedin and MOB4/phocein; this interactions mediate the association with the STRIPAK core complex and may regulate dendritic spine distribution of the STRIPAK complex in hippocampal neurons. Activation of glutamate receptors weakens the interaction with STRN and STRN4.

It is found in the cytoplasm. Its subcellular location is the cell cortex. The protein localises to the cell projection. It localises to the dendritic spine. Regulates the dendritic spine distribution of CTTN/cortactin in hippocampal neurons, and thus controls dendritic spinogenesis and dendritic spine maintenance. Associates with the striatin-interacting phosphatase and kinase (STRIPAK) core complex to regulate dendritic spine distribution of the STRIPAK complex in hippocampal neurons. The chain is Cortactin-binding protein 2 (CTTNBP2) from Neofelis nebulosa (Clouded leopard).